The following is a 299-amino-acid chain: Protease HtpX homolog (299 aa).

Transmembrane regions (helical) follow at residues 14–34 (WLLL…VGNL) and 39–59 (GFGG…TMIF). His143 contacts Zn(2+). The active site involves Glu144. Position 147 (His147) interacts with Zn(2+). 2 consecutive transmembrane segments (helical) span residues 153–173 (IRIS…AGMA) and 198–218 (IVFL…ATLV). A Zn(2+)-binding site is contributed by Glu227.

Belongs to the peptidase M48B family. The cofactor is Zn(2+).

Its subcellular location is the cell membrane. The protein is Protease HtpX homolog of Streptococcus thermophilus (strain ATCC BAA-250 / LMG 18311).